Consider the following 1438-residue polypeptide: DNA polymerase III PolC-type (1438 aa).

The Exonuclease domain occupies 422 to 578 (YVVFDVETTG…YDTEATAYIF (157 aa)).

It belongs to the DNA polymerase type-C family. PolC subfamily.

The protein resides in the cytoplasm. The catalysed reaction is DNA(n) + a 2'-deoxyribonucleoside 5'-triphosphate = DNA(n+1) + diphosphate. Its function is as follows. Required for replicative DNA synthesis. This DNA polymerase also exhibits 3' to 5' exonuclease activity. In Staphylococcus aureus (strain MSSA476), this protein is DNA polymerase III PolC-type.